Here is a 100-residue protein sequence, read N- to C-terminus: Small ribosomal subunit protein bS20 (100 aa).

Belongs to the bacterial ribosomal protein bS20 family.

In terms of biological role, binds directly to 16S ribosomal RNA. The protein is Small ribosomal subunit protein bS20 of Prochlorococcus marinus (strain MIT 9211).